We begin with the raw amino-acid sequence, 309 residues long: Ribonuclease Z (309 aa).

Histidine 63, histidine 65, aspartate 67, histidine 68, histidine 145, aspartate 216, and histidine 274 together coordinate Zn(2+). The Proton acceptor role is filled by aspartate 67.

It belongs to the RNase Z family. In terms of assembly, homodimer. The cofactor is Zn(2+).

It catalyses the reaction Endonucleolytic cleavage of RNA, removing extra 3' nucleotides from tRNA precursor, generating 3' termini of tRNAs. A 3'-hydroxy group is left at the tRNA terminus and a 5'-phosphoryl group is left at the trailer molecule.. Its function is as follows. Zinc phosphodiesterase, which displays some tRNA 3'-processing endonuclease activity. Probably involved in tRNA maturation, by removing a 3'-trailer from precursor tRNA. This is Ribonuclease Z from Streptococcus equi subsp. zooepidemicus (strain H70).